We begin with the raw amino-acid sequence, 691 residues long: DNA ligase (691 aa).

Residues 53–57 (DSEYD), 102–103 (SL), and Glu-135 each bind NAD(+). Catalysis depends on Lys-137, which acts as the N6-AMP-lysine intermediate. NAD(+) is bound by residues Arg-158, Glu-195, Lys-310, and Lys-334. Positions 428, 431, 446, and 452 each coordinate Zn(2+). The BRCT domain occupies 613 to 691 (SEGLPLDGQT…EEEFLALVGE (79 aa)).

It belongs to the NAD-dependent DNA ligase family. LigA subfamily. Mg(2+) is required as a cofactor. The cofactor is Mn(2+).

The enzyme catalyses NAD(+) + (deoxyribonucleotide)n-3'-hydroxyl + 5'-phospho-(deoxyribonucleotide)m = (deoxyribonucleotide)n+m + AMP + beta-nicotinamide D-nucleotide.. In terms of biological role, DNA ligase that catalyzes the formation of phosphodiester linkages between 5'-phosphoryl and 3'-hydroxyl groups in double-stranded DNA using NAD as a coenzyme and as the energy source for the reaction. It is essential for DNA replication and repair of damaged DNA. This Psychrobacter arcticus (strain DSM 17307 / VKM B-2377 / 273-4) protein is DNA ligase.